The chain runs to 865 residues: Chitin synthase 3 (865 aa).

Residues 1-59 (MASQYPGHQLDDIPSTNVYRPPPRHEDDEAEHALLHQNSAYQSQYDDPHSRPLTPGQES) form a disordered region. The span at 23-34 (PRHEDDEAEHAL) shows a compositional bias: basic and acidic residues. Positions 36-45 (HQNSAYQSQY) are enriched in polar residues. N64, N95, and N538 each carry an N-linked (GlcNAc...) asparagine glycan. A run of 3 helical transmembrane segments spans residues 565 to 585 (FFLH…WFSL), 620 to 640 (IINT…FILA), and 650 to 670 (VAYI…IVLS). N682 carries an N-linked (GlcNAc...) asparagine glycan. 3 helical membrane passes run 707-727 (IVII…FLYM), 735-755 (SFAQ…IYAF), and 837-857 (LVAT…SDSL).

Belongs to the chitin synthase family. Class III subfamily.

The protein localises to the cell membrane. The catalysed reaction is [(1-&gt;4)-N-acetyl-beta-D-glucosaminyl](n) + UDP-N-acetyl-alpha-D-glucosamine = [(1-&gt;4)-N-acetyl-beta-D-glucosaminyl](n+1) + UDP + H(+). Its function is as follows. Polymerizes chitin, a structural polymer of the cell wall and septum, by transferring the sugar moiety of UDP-GlcNAc to the non-reducing end of the growing chitin polymer. Is not only stable at different pH, but is also able to tolerate a broad temperature range. With CHS2, plays an important role in virulence. The chain is Chitin synthase 3 from Exophiala dermatitidis (strain ATCC 34100 / CBS 525.76 / NIH/UT8656) (Black yeast).